The primary structure comprises 264 residues: Probable glycerol uptake facilitator protein (264 aa).

2 helical membrane-spanning segments follow: residues 13–33 and 51–71; these read WIGA…GAGS and TAAF…NSLF. Positions 78–80 match the NPA 1 motif; that stretch reads NPA. 3 helical membrane-spanning segments follow: residues 104–124, 162–182, and 195–215; these read IPLL…GAML, FATE…AGSF, and VPML…GTAI. The short motif at 216–218 is the NPA 2 element; that stretch reads NPA. Residues 244–264 form a helical membrane-spanning segment; sequence IPVAAPLSASVILGVLVAVIV.

Belongs to the MIP/aquaporin (TC 1.A.8) family.

The protein resides in the cell membrane. It carries out the reaction glycerol(in) = glycerol(out). Its function is as follows. Mediates glycerol diffusion across the cytoplasmic membrane via a pore-type mechanism. This Mycoplasma pneumoniae (strain ATCC 29342 / M129 / Subtype 1) (Mycoplasmoides pneumoniae) protein is Probable glycerol uptake facilitator protein (glpF).